Reading from the N-terminus, the 380-residue chain is Kappa-type opioid receptor (380 aa).

At 1-57 (MEPPVQIFRGEPGPTCSPSTCLPPNGSGWFPGWAEPDGNGSAGSEDVLLEPAHISPV) the chain is on the extracellular side. N-linked (GlcNAc...) asparagine glycosylation is found at Asn-25 and Asn-39. The chain crosses the membrane as a helical span at residues 58-85 (ILVIITAVYSVVFVVGLVGNSLVMFVII). Residues 86-95 (RYTKMKTATN) lie on the Cytoplasmic side of the membrane. A helical transmembrane segment spans residues 96 to 119 (IYIFNLALADALVTTTMPFQSTVY). The Extracellular segment spans residues 120–132 (LMNSWPFGDVLCK). Residues Cys-131 and Cys-210 are joined by a disulfide bond. The helical transmembrane segment at 133 to 154 (VVISIDYYNMFTSIFTLTMMSV) threads the bilayer. The Cytoplasmic segment spans residues 155–173 (DRYIAVCHPVKALDFRTPL). A helical transmembrane segment spans residues 174–196 (KAKIINICIWILSSSVGISAIVL). At 197-222 (GGTKVREDMEVIECSLQFPDDDYSWW) the chain is on the extracellular side. The helical transmembrane segment at 223-247 (DLFMKVCVFVFAFVIPVLIIIVCYT) threads the bilayer. At 248–274 (LMILRLKSVRLLSGSREKDRNLRRITR) the chain is on the cytoplasmic side. Residues 275 to 296 (LVLVVVAVFVVCWTPIHIFILV) traverse the membrane as a helical segment. At 297-311 (EALGSTAHSTAALSS) the chain is on the extracellular side. Residues 312 to 333 (YYFCIALGYTNSSLNPILYAFL) form a helical membrane-spanning segment. Residues 334–380 (DENFKRCFRDFCFPIKMRMERQSTSRVRNTVQDPAYVREVDGVNKPV) are Cytoplasmic-facing. A lipid anchor (S-palmitoyl cysteine) is attached at Cys-345.

It belongs to the G-protein coupled receptor 1 family. As to quaternary structure, interacts with NHERF1. Interacts with GABARAPL1.

It is found in the cell membrane. G-protein coupled opioid receptor that functions as a receptor for endogenous alpha-neoendorphins and dynorphins, but has low affinity for beta-endorphins. Also functions as a receptor for various synthetic opioids and for the psychoactive diterpene salvinorin A. Ligand binding causes a conformation change that triggers signaling via guanine nucleotide-binding proteins (G proteins) and modulates the activity of down-stream effectors, such as adenylate cyclase. Signaling leads to the inhibition of adenylate cyclase activity. Inhibits neurotransmitter release by reducing calcium ion currents and increasing potassium ion conductance. Plays a role in the perception of pain. Plays a role in mediating reduced physical activity upon treatment with synthetic opioids. Plays a role in the regulation of salivation in response to synthetic opioids. May play a role in arousal and regulation of autonomic and neuroendocrine functions. The sequence is that of Kappa-type opioid receptor (OPRK1) from Bos taurus (Bovine).